A 537-amino-acid chain; its full sequence is Probable quinate permease (537 aa).

Topologically, residues 1–22 (MSILSLVEDRPTPKEVYNWKIY) are cytoplasmic. Residues 23 to 43 (LLAAVASCTSCMIGYDSAFIG) form a helical membrane-spanning segment. Over 44–74 (TTISLQSFKDEFDWDSMSAAHQDLVSSNIVS) the chain is Extracellular. Residues 75–95 (LYQAGAFFGAFFAYPIGHFWG) traverse the membrane as a helical segment. The Cytoplasmic portion of the chain corresponds to 96 to 97 (RK). The helical transmembrane segment at 98-118 (WGLMVSALIFTLGAGIMLGTN) threads the bilayer. The Extracellular portion of the chain corresponds to 119–130 (GDRGFGLLYGGR). A helical membrane pass occupies residues 131 to 151 (VLAGLGVGAGSNITPIYISEL). The Cytoplasmic segment spans residues 152–159 (SPPAIRGR). Residues 160–180 (LVGVYELGWQIGGLVGFWICY) traverse the membrane as a helical segment. Residues 181 to 193 (GVDETLPPSHKQW) are Extracellular-facing. The chain crosses the membrane as a helical span at residues 194–214 (IIPFAVQLIPSGLLIIGALFL). The Cytoplasmic segment spans residues 215–285 (KESPRWLFLR…AWTNKKILYR (71 aa)). Residues 286–306 (LFLGSMLFFWQNGSGINAINY) form a helical membrane-spanning segment. Residues 307–325 (YSPTVFKSIGVTGSNTSLF) lie on the Extracellular side of the membrane. A helical membrane pass occupies residues 326–346 (TTGIFGVVKTVVTFIWLLWLI). Residues 347–352 (DRVGRR) lie on the Cytoplasmic side of the membrane. A helical membrane pass occupies residues 353–373 (LLLLIGAAGGSICLWIVGAYI). Topologically, residues 374-387 (KIARPSERENKQMD) are extracellular. The helical transmembrane segment at 388–408 (GGGIAAMFFFYLWTVFYTPSW) threads the bilayer. Topologically, residues 409-456 (NGTPWVINSEMFDPNIRSLAQACAAGSNWLWNFLISRFTPQMFAKMDY) are cytoplasmic. The helical transmembrane segment at 457 to 477 (GVYFFFASLMILSIIFVFFLI) threads the bilayer. Residues 478-537 (PETKGIPLESMDRLFETQPIWRAHGTLLKQIREDEERFRHDLEDSGFVKSTDRQVEVVDA) lie on the Extracellular side of the membrane.

This sequence belongs to the major facilitator superfamily. Sugar transporter (TC 2.A.1.1) family. As to quaternary structure, interacts with creB. Post-translationally, ubiquitinated. Deubiquitinated by creB, probably to control its activity or amount.

It is found in the cell membrane. Integral membrane transporter that imports quinic acid to be catabolized as a carbon source. The chain is Probable quinate permease (qutD) from Aspergillus flavus (strain ATCC 200026 / FGSC A1120 / IAM 13836 / NRRL 3357 / JCM 12722 / SRRC 167).